The following is a 756-amino-acid chain: Inhibitor of nuclear factor kappa-B kinase subunit beta (756 aa).

The region spanning 15 to 300 (WEMKERLGTG…DPVYGPNGCF (286 aa)) is the Protein kinase domain. ATP-binding positions include 21–29 (LGTGGFGNV) and lysine 44. Aspartate 145 (proton acceptor) is an active-site residue. Lysine 163 participates in a covalent cross-link: Glycyl lysine isopeptide (Lys-Gly) (interchain with G-Cter in ubiquitin). Phosphoserine; by TBK1 and PKC/PRKCZ is present on serine 177. S-nitrosocysteine is present on cysteine 179. A Phosphoserine; by TBK1, PKC/PRKCZ and PDPK1 modification is found at serine 181. At proline 191 the chain carries Hydroxyproline. The tract at residues 458-479 (LLRNNSCLSKMKNSMASMSQQL) is leucine-zipper. Phosphoserine; by autocatalysis is present on residues serine 670, serine 672, serine 675, serine 682, serine 689, serine 697, serine 705, serine 733, and serine 740. Residues 737 to 742 (LDWSWL) are NEMO-binding.

It belongs to the protein kinase superfamily. Ser/Thr protein kinase family. I-kappa-B kinase subfamily. Component of the I-kappa-B-kinase (IKK) core complex consisting of CHUK, IKBKB and IKBKG; probably four alpha/CHUK-beta/IKBKB dimers are associated with four gamma/IKBKG subunits. The IKK core complex seems to associate with regulatory or adapter proteins to form a IKK-signalosome holo-complex. The IKK complex associates with TERF2IP/RAP1, leading to promote IKK-mediated phosphorylation of RELA/p65. Part of a complex composed of NCOA2, NCOA3, CHUK/IKKA, IKBKB, IKBKG and CREBBP. Part of a 70-90 kDa complex at least consisting of CHUK/IKKA, IKBKB, NFKBIA, RELA, ELP1 and MAP3K14. Found in a membrane raft complex, at least composed of BCL10, CARD11, DPP4 and IKBKB. Interacts with SQSTM1 through PRKCZ or PRKCI. Forms an NGF-induced complex with IKBKB, PRKCI and TRAF6. May interact with MAVS/IPS1. Interacts with NALP2. Interacts with TICAM1. Interacts with FAF1; the interaction disrupts the IKK complex formation. Interacts with ATM. Part of a ternary complex consisting of TANK, IKBKB and IKBKG. Interacts with NIBP; the interaction is direct. Interacts with ARRB1 and ARRB2. Interacts with TRIM21. Interacts with NLRC5; prevents IKBKB phosphorylation and kinase activity. Interacts with PDPK1. Interacts with EIF2AK2/PKR. The phosphorylated form interacts with PPM1A and PPM1B. Interacts with ZNF268; the interaction is further increased in a TNF-alpha-dependent manner. Interacts with IKBKE. Interacts with ZC3H12A. Interacts with AKAP13. Interacts with IFIT5; the interaction synergizes the recruitment of IKK to MAP3K7 and enhances IKK phosphorylation. Interacts with LRRC14; disrupts IKBKB-IKBKG interaction preventing I-kappa-B-kinase (IKK) core complex formation and leading to a decrease of IKBKB phosphorylation and NF-kappaB activation. Interacts with SASH1. Interacts with ARFIP2. Interacts with FKBP5. Post-translationally, upon cytokine stimulation, phosphorylated on Ser-177 and Ser-181 by MEKK1 and/or MAP3K14/NIK as well as TBK1 and PRKCZ; which enhances activity. Phosphorylated by MAP3K7/TAK1 in response to NOD1 and NOD2 signaling, promoting activation and phosphorylation of NF-kappa-B inhibitors, leading to NF-kappa-B activation. Once activated, autophosphorylates on the C-terminal serine cluster; which decreases activity and prevents prolonged activation of the inflammatory response. Phosphorylated by the IKK-related kinases TBK1 and IKBKE, which is associated with reduced CHUK/IKKA and IKBKB activity and NF-kappa-B-dependent gene transcription. Dephosphorylated at Ser-177 and Ser-181 by PPM1A and PPM1B. Ubiquitinated. Monoubiquitination involves TRIM21 that leads to inhibition of Tax-induced NF-kappa-B signaling. 'Ser-163' may not serve as a monoubiquitination site. Ubiquitination on 'Ser-163' may modulate phosphorylation on C-terminal serine residues. In terms of processing, hydroxylated by PHD1/EGLN2, loss of hydroxylation under hypoxic conditions results in activation of NF-kappa-B.

The protein localises to the cytoplasm. Its subcellular location is the nucleus. It is found in the membrane raft. The catalysed reaction is L-seryl-[I-kappa-B protein] + ATP = O-phospho-L-seryl-[I-kappa-B protein] + ADP + H(+). It catalyses the reaction L-seryl-[protein] + ATP = O-phospho-L-seryl-[protein] + ADP + H(+). The enzyme catalyses L-threonyl-[protein] + ATP = O-phospho-L-threonyl-[protein] + ADP + H(+). In terms of biological role, serine kinase that plays an essential role in the NF-kappa-B signaling pathway which is activated by multiple stimuli such as inflammatory cytokines, bacterial or viral products, DNA damages or other cellular stresses. Acts as a part of the canonical IKK complex in the conventional pathway of NF-kappa-B activation. Phosphorylates inhibitors of NF-kappa-B on 2 critical serine residues. These modifications allow polyubiquitination of the inhibitors and subsequent degradation by the proteasome. In turn, free NF-kappa-B is translocated into the nucleus and activates the transcription of hundreds of genes involved in immune response, growth control, or protection against apoptosis. In addition to the NF-kappa-B inhibitors, phosphorylates several other components of the signaling pathway including NEMO/IKBKG, NF-kappa-B subunits RELA and NFKB1, as well as IKK-related kinases TBK1 and IKBKE. IKK-related kinase phosphorylations may prevent the overproduction of inflammatory mediators since they exert a negative regulation on canonical IKKs. Phosphorylates FOXO3, mediating the TNF-dependent inactivation of this pro-apoptotic transcription factor. Also phosphorylates other substrates including NAA10, NCOA3, BCL10 and IRS1. Phosphorylates RIPK1 at 'Ser-25' which represses its kinase activity and consequently prevents TNF-mediated RIPK1-dependent cell death. Phosphorylates the C-terminus of IRF5, stimulating IRF5 homodimerization and translocation into the nucleus. This is Inhibitor of nuclear factor kappa-B kinase subunit beta (IKBKB) from Bos taurus (Bovine).